The following is a 65-amino-acid chain: Large ribosomal subunit protein bL35 (65 aa).

Positions 1–26 (MPKMKSNKGASKRFKKTASGGFKCKQ) are disordered.

It belongs to the bacterial ribosomal protein bL35 family.

The chain is Large ribosomal subunit protein bL35 from Idiomarina loihiensis (strain ATCC BAA-735 / DSM 15497 / L2-TR).